The chain runs to 279 residues: Non-structural maintenance of chromosomes element 3 homolog (279 aa).

The interval Met-1–Gly-52 is disordered. The segment covering Ser-30 to Ala-48 has biased composition (low complexity). Ser-38 is modified (phosphoserine). The segment at Gly-52–Ser-279 is interaction with NSMCE1. An MAGE domain is found at Leu-59–Ala-259.

In terms of assembly, component of the SMC5-SMC6 complex which consists at least of SMC5, SMC6, NSMCE2, NSMCE1, NSMCE4A or EID3 and NSMCE3. NSMCE1, NSMCE4A or EID3 and NSMCE3 probably form a subcomplex that bridges the head domains of the SMC5:SMC6 heterodimer. Interacts with PJA1. Interacts with E2F1 (via C-terminus). Interacts with NGFR (via C-terminus). Interacts with NSMCE1. Interacts with NSMCE4. Interacts with SMC6. Interacts with EID3. Ubiquitous.

It localises to the cytoplasm. The protein localises to the nucleus. Its subcellular location is the chromosome. It is found in the telomere. Functionally, component of the SMC5-SMC6 complex, a complex involved in repair of DNA double-strand breaks by homologous recombination. The complex may promote sister chromatid homologous recombination by recruiting the SMC1-SMC3 cohesin complex to double-strand breaks. The complex is required for telomere maintenance via recombination in ALT (alternative lengthening of telomeres) cell lines and mediates sumoylation of shelterin complex (telosome) components which is proposed to lead to shelterin complex disassembly in ALT-associated PML bodies (APBs). In vitro enhances ubiquitin ligase activity of NSMCE1. Proposed to act through recruitment and/or stabilization of the Ubl-conjugating enzyme (E2) at the E3:substrate complex. May be a growth suppressor that facilitates the entry of the cell into cell cycle arrest. The protein is Non-structural maintenance of chromosomes element 3 homolog (Nsmce3) of Mus musculus (Mouse).